The sequence spans 427 residues: Glucose-1-phosphate adenylyltransferase (427 aa).

Residues arginine 40, histidine 46, and arginine 52 each coordinate AMP. Tyrosine 114 contacts alpha-D-glucose 1-phosphate. Arginine 130 contacts AMP. Residues glycine 179, 194-195, and serine 212 each bind alpha-D-glucose 1-phosphate; that span reads EK. Arginine 386 is a binding site for AMP.

Belongs to the bacterial/plant glucose-1-phosphate adenylyltransferase family. In terms of assembly, homotetramer.

It carries out the reaction alpha-D-glucose 1-phosphate + ATP + H(+) = ADP-alpha-D-glucose + diphosphate. The protein operates within glycan biosynthesis; glycogen biosynthesis. With respect to regulation, allosterically activated by fructose-1,6-bisphosphate (F16BP) and inhibited by AMP. Involved in the biosynthesis of ADP-glucose, a building block required for the elongation reactions to produce glycogen. Catalyzes the reaction between ATP and alpha-D-glucose 1-phosphate (G1P) to produce pyrophosphate and ADP-Glc. The polypeptide is Glucose-1-phosphate adenylyltransferase (Cronobacter sakazakii (strain ATCC BAA-894) (Enterobacter sakazakii)).